Reading from the N-terminus, the 230-residue chain is Thymidylate kinase (230 aa).

20-27 (GGEGAGKS) serves as a coordination point for ATP.

Belongs to the thymidylate kinase family.

The catalysed reaction is dTMP + ATP = dTDP + ADP. In terms of biological role, phosphorylation of dTMP to form dTDP in both de novo and salvage pathways of dTTP synthesis. The polypeptide is Thymidylate kinase (Rhodopseudomonas palustris (strain BisB18)).